The following is a 193-amino-acid chain: dCTP deaminase (193 aa).

DCTP is bound by residues 110–115, D128, 136–138, Y171, K178, and Q182; these read RSSLAR and VLE. The active-site Proton donor/acceptor is the E138.

Belongs to the dCTP deaminase family. In terms of assembly, homotrimer.

The catalysed reaction is dCTP + H2O + H(+) = dUTP + NH4(+). It participates in pyrimidine metabolism; dUMP biosynthesis; dUMP from dCTP (dUTP route): step 1/2. In terms of biological role, catalyzes the deamination of dCTP to dUTP. The chain is dCTP deaminase from Tolumonas auensis (strain DSM 9187 / NBRC 110442 / TA 4).